Here is a 304-residue protein sequence, read N- to C-terminus: Tyrosine recombinase XerD (304 aa).

One can recognise a Core-binding (CB) domain in the interval 6-91 (EPWRKTLETF…AIRSFHKFLL (86 aa)). The Tyr recombinase domain maps to 112–298 (YLPSVLTIEE…DRSFIKEVHK (187 aa)). Residues Arg-155, Lys-179, His-250, Arg-253, and His-276 contribute to the active site. The O-(3'-phospho-DNA)-tyrosine intermediate role is filled by Tyr-285.

Belongs to the 'phage' integrase family. XerD subfamily. Forms a cyclic heterotetrameric complex composed of two molecules of XerC and two molecules of XerD.

The protein localises to the cytoplasm. In terms of biological role, site-specific tyrosine recombinase, which acts by catalyzing the cutting and rejoining of the recombining DNA molecules. The XerC-XerD complex is essential to convert dimers of the bacterial chromosome into monomers to permit their segregation at cell division. It also contributes to the segregational stability of plasmids. The chain is Tyrosine recombinase XerD from Chlorobaculum tepidum (strain ATCC 49652 / DSM 12025 / NBRC 103806 / TLS) (Chlorobium tepidum).